The chain runs to 796 residues: Protein translocase subunit SecA 2 (796 aa).

ATP-binding positions include Gln84, 102–106, and Asp496; that span reads GEGKT.

The protein belongs to the SecA family. In terms of assembly, monomer and homodimer (Potential). Part of the accessory SecA2/SecY2 protein translocation apparatus required to export cell wall protein SraP.

It is found in the cell membrane. The protein localises to the cytoplasm. It carries out the reaction ATP + H2O + cellular proteinSide 1 = ADP + phosphate + cellular proteinSide 2.. Part of the accessory SecA2/SecY2 system specifically required to export SraP, a serine-rich repeat cell wall protein encoded upstream in the same operon. This Staphylococcus aureus (strain NCTC 8325 / PS 47) protein is Protein translocase subunit SecA 2.